The primary structure comprises 434 residues: 3-phosphoshikimate 1-carboxyvinyltransferase (434 aa).

Residues K15, S16, and R20 each coordinate 3-phosphoshikimate. K15 is a binding site for phosphoenolpyruvate. G96 and R124 together coordinate phosphoenolpyruvate. The 3-phosphoshikimate site is built by S169, Q171, S195, D319, and K346. Residue Q171 participates in phosphoenolpyruvate binding. D319 acts as the Proton acceptor in catalysis. 2 residues coordinate phosphoenolpyruvate: R350 and R394.

The protein belongs to the EPSP synthase family. As to quaternary structure, monomer.

The protein resides in the cytoplasm. It catalyses the reaction 3-phosphoshikimate + phosphoenolpyruvate = 5-O-(1-carboxyvinyl)-3-phosphoshikimate + phosphate. It functions in the pathway metabolic intermediate biosynthesis; chorismate biosynthesis; chorismate from D-erythrose 4-phosphate and phosphoenolpyruvate: step 6/7. Functionally, catalyzes the transfer of the enolpyruvyl moiety of phosphoenolpyruvate (PEP) to the 5-hydroxyl of shikimate-3-phosphate (S3P) to produce enolpyruvyl shikimate-3-phosphate and inorganic phosphate. The sequence is that of 3-phosphoshikimate 1-carboxyvinyltransferase from Chlorobaculum tepidum (strain ATCC 49652 / DSM 12025 / NBRC 103806 / TLS) (Chlorobium tepidum).